A 240-amino-acid chain; its full sequence is Cysteine-rich venom protein catrin (240 aa).

Residues 1–19 form the signal peptide; the sequence is MIAFIVLPILAAVLQQSSG. The SCP domain maps to 38–166; it reads VDLHNFLRRS…KYSYFYVCQY (129 aa). 8 disulfide bridges follow: Cys75–Cys153, Cys92–Cys167, Cys148–Cys164, Cys186–Cys193, Cys189–Cys198, Cys202–Cys235, Cys211–Cys229, and Cys220–Cys233. The 34-residue stretch at 202 to 235 folds into the ShKT domain; it reads CTKEDKYTNCKSLVQQAGCQDKQMQSDCPAICFC.

The protein belongs to the CRISP family. In terms of tissue distribution, expressed by the venom gland.

The protein resides in the secreted. Functionally, catrin-2 weakly blocks contraction of smooth muscle elicited by high potassium-induced depolarization, but does not block caffeine-stimulated contraction. Catrin-1 has no significant effect. May target voltage-gated calcium channels on smooth muscle. This is Cysteine-rich venom protein catrin from Crotalus atrox (Western diamondback rattlesnake).